The primary structure comprises 90 residues: Putative defensin-like protein 64 (90 aa).

Positions 1–23 are cleaved as a signal peptide; the sequence is MWGRQIVLKIFFLVLSCVIVIET. Intrachain disulfides connect Cys33–Cys56 and Cys42–Cys77.

It belongs to the DEFL family.

The protein resides in the secreted. The polypeptide is Putative defensin-like protein 64 (Arabidopsis thaliana (Mouse-ear cress)).